The chain runs to 332 residues: dTDP-3,4-didehydro-2,6-dideoxy-alpha-D-glucose 3-reductase (332 aa).

12–18 (CASFAWR) is a binding site for NADP(+). Residue Arg-19 coordinates substrate. Residues 37-38 (SR), Tyr-58, Leu-74, and His-79 each bind NADP(+). The active-site Proton donor is Lys-97. 2 residues coordinate NADP(+): Arg-165 and Asp-177. Residues Tyr-235 and Thr-255 each contribute to the substrate site.

This sequence belongs to the Gfo/Idh/MocA family. As to quaternary structure, monomer.

The catalysed reaction is dTDP-4-dehydro-2,6-dideoxy-alpha-D-glucose + NADP(+) = dTDP-3,4-didehydro-2,6-dideoxy-alpha-D-glucose + NADPH + H(+). Involved in the biosynthesis of forosamine ((4-dimethylamino)-2,3,4,6-tetradeoxy-alpha-D-threo-hexopyranose), a highly deoxygenated sugar component of several bioactive natural products such as the insecticidal spinosyns A and D. Catalyzes the reduction of the C-3 keto moiety of dTDP-3,4-diketo-2,6-dideoxy-alpha-D-glucose to yield dTDP-4-keto-2,6-dideoxy-alpha-D-glucose. NADPH is the better reductant, however NADH can also be used. The protein is dTDP-3,4-didehydro-2,6-dideoxy-alpha-D-glucose 3-reductase of Saccharopolyspora spinosa.